A 589-amino-acid chain; its full sequence is MSQGTIVKVSGPLVIAEGMRDANMFDVVRVSEHRLIGEIIEMHGDRASIQVYEETAGLGPGEPVVSTGAPLSVELGPGLIENIFDGIQRPLVKMREMVGSNITRGIDVTALDRSKKWDFQPTVKKGDKVTAGDVIGKVQETSIVEHRIMVPYGVQGTIEEIKSGSFTVEETVAKVRTENNELVDICMMQKWPVRIGRPYREKLPPNAPLVTGQRVIDTLFPLAKGGVAAVPGPFGSGKTVVQHQLAKWADADIVVYIGCGERGNEMTDVLKEFPELKDPKTGESLMKRTVLIANTSDMPVAAREASIYTGMTIAEYFRDMGYSVALMADSTSRWAEALREMSGRLEEMPGEEGYPAYLGSRLAQFYERAGRVVCLGSDGREGALTAIGAVSPPGGDLSEPVTQATLRIIKVFWGLDSSLAYRRHFPAINWLQSYSLYLDIIGKWISENISRDWETLRSDTMRILQEEAELEEIVRLVGVDALSPSDRLTLEAAKSIREDYLHQNAFHEVDTYTSLNKQYRMLKLILGFYYSGKKALEAGVSIKELFELPVREKIGRAKYTPEDQVNSHFNEIEKELNEQIEALIAKEVQ.

232-239 provides a ligand contact to ATP; sequence GPFGSGKT.

This sequence belongs to the ATPase alpha/beta chains family.

The catalysed reaction is ATP + H2O + 4 H(+)(in) = ADP + phosphate + 5 H(+)(out). In terms of biological role, produces ATP from ADP in the presence of a proton gradient across the membrane. The V-type alpha chain is a catalytic subunit. In Acetivibrio thermocellus (strain ATCC 27405 / DSM 1237 / JCM 9322 / NBRC 103400 / NCIMB 10682 / NRRL B-4536 / VPI 7372) (Clostridium thermocellum), this protein is V-type ATP synthase alpha chain.